Consider the following 94-residue polypeptide: Large ribosomal subunit protein uL23 (94 aa).

This sequence belongs to the universal ribosomal protein uL23 family. Part of the 50S ribosomal subunit. Contacts protein L29, and trigger factor when it is bound to the ribosome.

Functionally, one of the early assembly proteins it binds 23S rRNA. One of the proteins that surrounds the polypeptide exit tunnel on the outside of the ribosome. Forms the main docking site for trigger factor binding to the ribosome. The protein is Large ribosomal subunit protein uL23 of Listeria monocytogenes serotype 4b (strain CLIP80459).